The following is a 91-amino-acid chain: Teretoxin Tan6.2 (91 aa).

The first 21 residues, 1-21 (MATSGRLLCVCLVLGLVFGSL), serve as a signal peptide directing secretion. Residues 22–50 (GYPVMEKKRAGKNFDLGTIANWAWQIGEK) constitute a propeptide that is removed on maturation.

It belongs to the teretoxin M (TM) superfamily. Contains 3 disulfide bonds. As to expression, expressed by the venom duct.

Its subcellular location is the secreted. This is Teretoxin Tan6.2 from Terebra anilis (Auger snail).